The chain runs to 65 residues: Disintegrin CC8A (65 aa).

One can recognise a Disintegrin domain in the interval 1 to 65; sequence MNSAHPCCDP…SDCPRNRIKK (65 aa). Intrachain disulfides connect Cys-7-Cys-30, Cys-21-Cys-27, Cys-26-Cys-51, and Cys-39-Cys-58. The Cell attachment site motif lies at 43 to 45; that stretch reads RGD.

This sequence belongs to the disintegrin family. Dimeric disintegrin subfamily. As to quaternary structure, heterodimer with CC8B; disulfide-linked. Expressed by the venom gland.

It is found in the secreted. Its function is as follows. Inhibits integrins alpha-IIb/beta-3 (ITGA2B/ITGB3), alpha-V/beta-3 (ITGAV/ITGB3), and alpha-5/beta-1 (ITGA5/ITGB1). The protein is Disintegrin CC8A of Cerastes cerastes (Horned desert viper).